A 362-amino-acid chain; its full sequence is Protein RecA (362 aa).

An ATP-binding site is contributed by 77 to 84 (GPESSGKT).

The protein belongs to the RecA family.

It localises to the cytoplasm. In terms of biological role, can catalyze the hydrolysis of ATP in the presence of single-stranded DNA, the ATP-dependent uptake of single-stranded DNA by duplex DNA, and the ATP-dependent hybridization of homologous single-stranded DNAs. It interacts with LexA causing its activation and leading to its autocatalytic cleavage. The polypeptide is Protein RecA (Nitrobacter winogradskyi (strain ATCC 25391 / DSM 10237 / CIP 104748 / NCIMB 11846 / Nb-255)).